We begin with the raw amino-acid sequence, 409 residues long: LL-diaminopimelate aminotransferase (409 aa).

Tyr-15 and Gly-42 together coordinate substrate. Pyridoxal 5'-phosphate is bound by residues Tyr-72, 108–109 (SK), Tyr-132, Asn-187, Tyr-218, and 246–248 (SFS). Positions 109, 132, and 187 each coordinate substrate. At Lys-249 the chain carries N6-(pyridoxal phosphate)lysine. The pyridoxal 5'-phosphate site is built by Arg-257 and Asn-292. Positions 292 and 388 each coordinate substrate.

This sequence belongs to the class-I pyridoxal-phosphate-dependent aminotransferase family. LL-diaminopimelate aminotransferase subfamily. Homodimer. Pyridoxal 5'-phosphate is required as a cofactor.

It catalyses the reaction (2S,6S)-2,6-diaminopimelate + 2-oxoglutarate = (S)-2,3,4,5-tetrahydrodipicolinate + L-glutamate + H2O + H(+). Its pathway is amino-acid biosynthesis; L-lysine biosynthesis via DAP pathway; LL-2,6-diaminopimelate from (S)-tetrahydrodipicolinate (aminotransferase route): step 1/1. Involved in the synthesis of meso-diaminopimelate (m-DAP or DL-DAP), required for both lysine and peptidoglycan biosynthesis. Catalyzes the direct conversion of tetrahydrodipicolinate to LL-diaminopimelate. This Heliobacterium modesticaldum (strain ATCC 51547 / Ice1) protein is LL-diaminopimelate aminotransferase.